Here is a 635-residue protein sequence, read N- to C-terminus: BTB/POZ domain and ankyrin repeat-containing protein NPR2 (635 aa).

Residues 97–191 enclose the BTB domain; the sequence is SDADVDVADG…LYTGKLRPAP (95 aa). The span at 138-152 shows a compositional bias: gly residues; that stretch reads AAGGGGGGGGGGGER. Residues 138 to 157 are disordered; it reads AAGGGGGGGGGGGERTGGRP. The C2HC NPR-type zinc finger occupies 194-208; it reads VVSCADPMCPHDSCP. 4 residues coordinate Zn(2+): cysteine 197, cysteine 202, histidine 204, and cysteine 207. 3 ANK repeats span residues 317 to 347, 349 to 376, and 380 to 409; these read KRVR…TLDD, NALH…NLNL, and RGYT…AVSQ. Residues 439–576 form a salicylic acid-binding core (SBC) region; that stretch reads ESNKDRLCID…FLEDDLPDSP (138 aa). Arginine 484 contacts salicylate.

This sequence belongs to the plant 'ANKYRIN-BTB/POZ' family. 'NPR1-like' subfamily. Interacts with NRR. Interacts with TGAL1 and TGAL11.

The protein localises to the nucleus. It functions in the pathway protein modification; protein ubiquitination. Salicylic acid (SA)-binding substrate-specific adapter of an E3 ubiquitin-protein ligase complex (CUL3-RBX1-BTB) which mediates the ubiquitination and subsequent proteasomal degradation of target proteins. May be involved in regulating basal defense responses against pathogens, and may be involved in crosstalk between SA- and JA-dependent signaling pathways. Does not seem to be involved in defense response against the bacterial blight disease caused by Xanthomonas oryzae pv. oryzae (Xoo). Over-expression of NPR2/NH2 does not confer disease resistance to Xoo. In Oryza sativa subsp. japonica (Rice), this protein is BTB/POZ domain and ankyrin repeat-containing protein NPR2.